The sequence spans 359 residues: UPF0283 membrane protein RHECIAT_CH0002430 (359 aa).

The tract at residues 1-50 (MSKPPSDPPRRPPAAFAYEDEASEPRNSGRQQQGRRKPESFSENIVVTPD) is disordered. Transmembrane regions (helical) follow at residues 77 to 97 (FGKI…GLWT) and 111 to 131 (LGYA…ALVI).

Belongs to the UPF0283 family.

The protein resides in the cell inner membrane. This chain is UPF0283 membrane protein RHECIAT_CH0002430, found in Rhizobium etli (strain CIAT 652).